The chain runs to 383 residues: Protein RecA (383 aa).

79–86 contacts ATP; sequence GPESSGKT.

Belongs to the RecA family.

The protein localises to the cytoplasm. Can catalyze the hydrolysis of ATP in the presence of single-stranded DNA, the ATP-dependent uptake of single-stranded DNA by duplex DNA, and the ATP-dependent hybridization of homologous single-stranded DNAs. It interacts with LexA causing its activation and leading to its autocatalytic cleavage. This is Protein RecA from Streptococcus gordonii (strain Challis / ATCC 35105 / BCRC 15272 / CH1 / DL1 / V288).